A 599-amino-acid chain; its full sequence is NADH-quinone oxidoreductase subunit C/D (599 aa).

Polar residues predominate over residues 1–15 (MTDLTAQELAQPSWQ). A disordered region spans residues 1-21 (MTDLTAQELAQPSWQTRDHQD). Positions 1 to 189 (MTDLTAQELA…DPFELTKQKE (189 aa)) are NADH dehydrogenase I subunit C. The segment at 213 to 599 (DFMFLNLGPN…IDFVMSDVDR (387 aa)) is NADH dehydrogenase I subunit D.

It in the N-terminal section; belongs to the complex I 30 kDa subunit family. The protein in the C-terminal section; belongs to the complex I 49 kDa subunit family. As to quaternary structure, NDH-1 is composed of 13 different subunits. Subunits NuoB, CD, E, F, and G constitute the peripheral sector of the complex.

The protein localises to the cell inner membrane. It carries out the reaction a quinone + NADH + 5 H(+)(in) = a quinol + NAD(+) + 4 H(+)(out). Functionally, NDH-1 shuttles electrons from NADH, via FMN and iron-sulfur (Fe-S) centers, to quinones in the respiratory chain. The immediate electron acceptor for the enzyme in this species is believed to be ubiquinone. Couples the redox reaction to proton translocation (for every two electrons transferred, four hydrogen ions are translocated across the cytoplasmic membrane), and thus conserves the redox energy in a proton gradient. The sequence is that of NADH-quinone oxidoreductase subunit C/D from Erwinia tasmaniensis (strain DSM 17950 / CFBP 7177 / CIP 109463 / NCPPB 4357 / Et1/99).